A 170-amino-acid chain; its full sequence is Peptide deformylase 2 (170 aa).

Fe cation contacts are provided by Cys94 and His136. The active site involves Glu137. Residue His140 participates in Fe cation binding.

This sequence belongs to the polypeptide deformylase family. Fe(2+) is required as a cofactor.

The enzyme catalyses N-terminal N-formyl-L-methionyl-[peptide] + H2O = N-terminal L-methionyl-[peptide] + formate. Removes the formyl group from the N-terminal Met of newly synthesized proteins. Requires at least a dipeptide for an efficient rate of reaction. N-terminal L-methionine is a prerequisite for activity but the enzyme has broad specificity at other positions. This chain is Peptide deformylase 2, found in Xanthomonas axonopodis pv. citri (strain 306).